The following is a 590-amino-acid chain: Transcription factor bHLH13 (590 aa).

Disordered stretches follow at residues Leu-274–Phe-296 and Ala-385–Arg-439. Residues Gln-281–His-293 are compositionally biased toward low complexity. Over residues Arg-416–Ala-425 the composition is skewed to basic residues. Positions Ala-429–Leu-478 constitute a bHLH domain.

Homodimer.

The protein resides in the nucleus. The polypeptide is Transcription factor bHLH13 (BHLH13) (Arabidopsis thaliana (Mouse-ear cress)).